Here is a 553-residue protein sequence, read N- to C-terminus: Putative transport protein YidE (553 aa).

5 helical membrane-spanning segments follow: residues 4–24 (IALT…IGNV), 28–48 (GIGL…HFVS), 65–85 (FGLI…FFAS), 95–115 (LFAV…HKLF), and 158–178 (MSYA…MWML). 2 consecutive RCK C-terminal domains span residues 191-276 (QQHE…VIGQ) and 279-361 (DTSL…VLGN). Transmembrane regions (helical) follow at residues 371-391 (MLPV…PVFV), 394-414 (FPAA…LILG), 439-459 (IVLF…NTLV), 464-484 (LSWI…VGIL), and 533-553 (LVMF…WSIG).

Belongs to the AAE transporter (TC 2.A.81) family. YidE subfamily.

The protein resides in the cell membrane. The chain is Putative transport protein YidE from Shigella dysenteriae serotype 1 (strain Sd197).